The following is a 226-amino-acid chain: MADVLKLDGIRKSYNVGTPVETEVLHGIDLTMQRGDFLALMGPSGSGKSTLLNIIGLLDRPTGGRLLINGEDTGQLSDSALTHLRGHAIGFVFQYHYLISAFTARENVMMPMLVDRGRPDAAMEKRADELLDRVGLSRWRNNSATNMSGGQQQRVAVARALAMDPDLVLADEPTGNLDTKSANDVFELMRQINRERGTTFLLVTHNDDLAERCDRIVRVVDGKIAG.

One can recognise an ABC transporter domain in the interval 5–225 (LKLDGIRKSY…IVRVVDGKIA (221 aa)). 42–49 (GPSGSGKS) lines the ATP pocket.

It belongs to the ABC transporter superfamily. Lipoprotein translocase (TC 3.A.1.125) family. As to quaternary structure, the complex is composed of two ATP-binding proteins (LolD) and two transmembrane proteins (LolC and LolE).

The protein resides in the cell inner membrane. In terms of biological role, part of the ABC transporter complex LolCDE involved in the translocation of mature outer membrane-directed lipoproteins, from the inner membrane to the periplasmic chaperone, LolA. Responsible for the formation of the LolA-lipoprotein complex in an ATP-dependent manner. The chain is Lipoprotein-releasing system ATP-binding protein LolD 1 from Rhodopseudomonas palustris (strain ATCC BAA-98 / CGA009).